The sequence spans 138 residues: Transcription factor Atoh7-a (138 aa).

One can recognise a bHLH domain in the interval K33–L85.

It localises to the nucleus. Its subcellular location is the perikaryon. It is found in the cell projection. The protein resides in the axon. Functionally, transcription factor that binds to DNA at the consensus sequence 5'-CAG[GC]TG-3'. Positively regulates the determination of retinal ganglion cell fate and formation of the optic nerve and retino-hypothalamic tract. Required for retinal circadian rhythm photoentrainment. Plays a role in brainstem auditory signaling and binaural processing. Regulates the differentiation of olfactory receptor neurons. During retinal neurogenesis, activates the transcription of several genes such as brn3d, coe3, cbfa2t2, glis2, elrC and xgadd45-gamma. This is Transcription factor Atoh7-a from Xenopus laevis (African clawed frog).